The primary structure comprises 478 residues: Cytochrome c-552 (478 aa).

The signal sequence occupies residues 1–26 (MTRIKINARRIFSLLIPFFFFTSVHA). His-94 lines the heme c pocket. Heme is bound by residues Cys-122, Cys-125, and Lys-126. Heme c contacts are provided by Cys-160, Cys-163, His-164, Cys-209, Cys-212, and His-213. Ca(2+) is bound by residues Glu-215, Tyr-216, Lys-261, and Gln-263. A substrate-binding site is contributed by Tyr-216. His-264 serves as a coordination point for substrate. The heme c site is built by His-275, Cys-282, Cys-285, His-286, His-301, Cys-314, Cys-317, His-318, and His-393.

Belongs to the cytochrome c-552 family. The cofactor is Ca(2+). Requires heme c as cofactor.

The protein localises to the periplasm. It carries out the reaction 6 Fe(III)-[cytochrome c] + NH4(+) + 2 H2O = 6 Fe(II)-[cytochrome c] + nitrite + 8 H(+). It functions in the pathway nitrogen metabolism; nitrate reduction (assimilation). Catalyzes the reduction of nitrite to ammonia, consuming six electrons in the process. In Escherichia coli (strain ATCC 8739 / DSM 1576 / NBRC 3972 / NCIMB 8545 / WDCM 00012 / Crooks), this protein is Cytochrome c-552.